Consider the following 411-residue polypeptide: Imidazolonepropionase (411 aa).

Fe(3+)-binding residues include His78 and His80. 2 residues coordinate Zn(2+): His78 and His80. Residues Arg87, Tyr150, and His183 each coordinate 4-imidazolone-5-propanoate. Tyr150 contacts N-formimidoyl-L-glutamate. Fe(3+) is bound at residue His248. His248 lines the Zn(2+) pocket. Gln251 provides a ligand contact to 4-imidazolone-5-propanoate. Residue Asp322 coordinates Fe(3+). Zn(2+) is bound at residue Asp322. Asn324 and Gly326 together coordinate N-formimidoyl-L-glutamate. Thr327 contributes to the 4-imidazolone-5-propanoate binding site.

The protein belongs to the metallo-dependent hydrolases superfamily. HutI family. Requires Zn(2+) as cofactor. The cofactor is Fe(3+).

The protein localises to the cytoplasm. The catalysed reaction is 4-imidazolone-5-propanoate + H2O = N-formimidoyl-L-glutamate. It participates in amino-acid degradation; L-histidine degradation into L-glutamate; N-formimidoyl-L-glutamate from L-histidine: step 3/3. Its function is as follows. Catalyzes the hydrolytic cleavage of the carbon-nitrogen bond in imidazolone-5-propanoate to yield N-formimidoyl-L-glutamate. It is the third step in the universal histidine degradation pathway. This is Imidazolonepropionase from Flavobacterium psychrophilum (strain ATCC 49511 / DSM 21280 / CIP 103535 / JIP02/86).